Consider the following 153-residue polypeptide: Prophage Rz endopeptidase RzpD (153 aa).

In terms of biological role, necessary for host cell lysis. It is believed to code for an endopeptidase that cleaves the amino-carboxyl cross-link between the diaminopimelic acid and D-alanine residues in the murein component of the bacterial cell wall. In Escherichia coli (strain K12), this protein is Prophage Rz endopeptidase RzpD (rzpD).